Reading from the N-terminus, the 115-residue chain is Ig kappa chain V region 3315 (115 aa).

Residues 1-24 (AQIVMTQTPSSVSAAVGGTVTINC) are framework-1. The segment at 25–37 (QSSQSVYENGRLS) is complementarity-determining-1. The interval 38–52 (WFQQKPGQPPKRLIY) is framework-2. Residues 53-59 (RASTLAS) are complementarity-determining-2. Positions 60–91 (GVSSRFTGSGSGTQFTLSISDVQCDDAATYYC) are framework-3. Positions 92 to 104 (LGNYDCSSGDSFT) are complementarity-determining-3. The tract at residues 105–114 (FGGGTEVVVK) is framework-4.

This is Ig kappa chain V region 3315 from Oryctolagus cuniculus (Rabbit).